Reading from the N-terminus, the 105-residue chain is Ig lambda-1 chain C region (105 aa).

The Ig-like domain occupies 6-100; the sequence is PSVTLFPPSS…EGHTVEKSLS (95 aa). An intrachain disulfide couples cysteine 27 to cysteine 86.

The protein is Ig lambda-1 chain C region of Mus musculus (Mouse).